Reading from the N-terminus, the 156-residue chain is Ribosomal RNA large subunit methyltransferase H (156 aa).

Residues L73, G104, and 123 to 128 (LSSLTL) contribute to the S-adenosyl-L-methionine site.

This sequence belongs to the RNA methyltransferase RlmH family. As to quaternary structure, homodimer.

It localises to the cytoplasm. It catalyses the reaction pseudouridine(1915) in 23S rRNA + S-adenosyl-L-methionine = N(3)-methylpseudouridine(1915) in 23S rRNA + S-adenosyl-L-homocysteine + H(+). Functionally, specifically methylates the pseudouridine at position 1915 (m3Psi1915) in 23S rRNA. The protein is Ribosomal RNA large subunit methyltransferase H of Ralstonia pickettii (strain 12J).